Reading from the N-terminus, the 882-residue chain is Valine--tRNA ligase (882 aa).

Residues 45–55 (PNVTGSLHIGH) carry the 'HIGH' region motif. Positions 525 to 529 (KFSKS) match the 'KMSKS' region motif. ATP is bound at residue Lys-528. The stretch at 812 to 881 (EGLIDVAKEK…VLKKGIQNLA (70 aa)) forms a coiled coil.

It belongs to the class-I aminoacyl-tRNA synthetase family. ValS type 1 subfamily. As to quaternary structure, monomer.

The protein resides in the cytoplasm. It carries out the reaction tRNA(Val) + L-valine + ATP = L-valyl-tRNA(Val) + AMP + diphosphate. Functionally, catalyzes the attachment of valine to tRNA(Val). As ValRS can inadvertently accommodate and process structurally similar amino acids such as threonine, to avoid such errors, it has a 'posttransfer' editing activity that hydrolyzes mischarged Thr-tRNA(Val) in a tRNA-dependent manner. The chain is Valine--tRNA ligase from Leptospira interrogans serogroup Icterohaemorrhagiae serovar Lai (strain 56601).